Consider the following 335-residue polypeptide: Glycerol-3-phosphate dehydrogenase [NAD(P)+] (335 aa).

Residues Ser-12, Trp-13, His-33, Arg-34, and Lys-108 each coordinate NADPH. Positions 108, 137, and 139 each coordinate sn-glycerol 3-phosphate. Ala-141 provides a ligand contact to NADPH. Positions 192, 245, 255, 256, and 257 each coordinate sn-glycerol 3-phosphate. Lys-192 (proton acceptor) is an active-site residue. Arg-256 lines the NADPH pocket. Glu-282 provides a ligand contact to NADPH.

It belongs to the NAD-dependent glycerol-3-phosphate dehydrogenase family.

Its subcellular location is the cytoplasm. The catalysed reaction is sn-glycerol 3-phosphate + NAD(+) = dihydroxyacetone phosphate + NADH + H(+). It carries out the reaction sn-glycerol 3-phosphate + NADP(+) = dihydroxyacetone phosphate + NADPH + H(+). Its pathway is membrane lipid metabolism; glycerophospholipid metabolism. Its function is as follows. Catalyzes the reduction of the glycolytic intermediate dihydroxyacetone phosphate (DHAP) to sn-glycerol 3-phosphate (G3P), the key precursor for phospholipid synthesis. This Methylococcus capsulatus (strain ATCC 33009 / NCIMB 11132 / Bath) protein is Glycerol-3-phosphate dehydrogenase [NAD(P)+].